The chain runs to 247 residues: Uroporphyrinogen-III C-methyltransferase (247 aa).

S-adenosyl-L-homocysteine-binding positions include proline 12, 117–118 (TA), methionine 168, alanine 197, and alanine 225.

It belongs to the precorrin methyltransferase family.

The catalysed reaction is uroporphyrinogen III + 2 S-adenosyl-L-methionine = precorrin-2 + 2 S-adenosyl-L-homocysteine + H(+). It functions in the pathway cofactor biosynthesis; adenosylcobalamin biosynthesis; precorrin-2 from uroporphyrinogen III: step 1/1. Its pathway is porphyrin-containing compound metabolism; siroheme biosynthesis; precorrin-2 from uroporphyrinogen III: step 1/1. In terms of biological role, catalyzes the two successive C-2 and C-7 methylation reactions involved in the conversion of uroporphyrinogen III to precorrin-2 via the intermediate formation of precorrin-1. It is a step in the biosynthesis of both cobalamin (vitamin B12) and siroheme. This Pseudomonas fluorescens protein is Uroporphyrinogen-III C-methyltransferase.